A 114-amino-acid polypeptide reads, in one-letter code: Late cornified envelope protein 1D (114 aa).

The span at 1-10 (MSCQQSQQQC) shows a compositional bias: low complexity. Disordered stretches follow at residues 1–21 (MSCQQSQQQCQPPPKCTPKCT) and 75–114 (HHRRHRSHRRRPQSSDCCSQPSGGSSCCGGGSSQHSGGCC). A compositionally biased stretch (basic residues) spans 75 to 86 (HHRRHRSHRRRP). Low complexity predominate over residues 88 to 99 (SSDCCSQPSGGS).

The protein belongs to the LCE family. Interacts with CYSRT1. As to expression, skin-specific. Expression was readily detected in adult trunk skin, adult arm skin, fetal skin, penal skin, vulva, esophagus and tongue. Not expressed in the cervix, rectum, lung, colon, or placenta.

Precursors of the cornified envelope of the stratum corneum. In Homo sapiens (Human), this protein is Late cornified envelope protein 1D (LCE1D).